Reading from the N-terminus, the 409-residue chain is Cobalt-precorrin-5B C(1)-methyltransferase (409 aa).

It belongs to the CbiD family.

The enzyme catalyses Co-precorrin-5B + S-adenosyl-L-methionine = Co-precorrin-6A + S-adenosyl-L-homocysteine. It functions in the pathway cofactor biosynthesis; adenosylcobalamin biosynthesis; cob(II)yrinate a,c-diamide from sirohydrochlorin (anaerobic route): step 6/10. Its function is as follows. Catalyzes the methylation of C-1 in cobalt-precorrin-5B to form cobalt-precorrin-6A. The sequence is that of Cobalt-precorrin-5B C(1)-methyltransferase from Methanopyrus kandleri (strain AV19 / DSM 6324 / JCM 9639 / NBRC 100938).